The sequence spans 965 residues: Phosphoenolpyruvate carboxylase (965 aa).

Serine 11 carries the post-translational modification Phosphoserine. Catalysis depends on residues histidine 173 and lysine 601.

This sequence belongs to the PEPCase type 1 family. In terms of assembly, homotetramer. Mg(2+) is required as a cofactor.

The protein localises to the cytoplasm. It carries out the reaction oxaloacetate + phosphate = phosphoenolpyruvate + hydrogencarbonate. The protein operates within photosynthesis; C3 acid pathway. By light-reversible phosphorylation. Through the carboxylation of phosphoenolpyruvate (PEP) it forms oxaloacetate, a four-carbon dicarboxylic acid source for the tricarboxylic acid cycle. This chain is Phosphoenolpyruvate carboxylase (PPC1), found in Solanum tuberosum (Potato).